The chain runs to 201 residues: ATP-dependent Clp protease proteolytic subunit (201 aa).

The active-site Nucleophile is Ser101. Residue His126 is part of the active site.

This sequence belongs to the peptidase S14 family. In terms of assembly, component of the chloroplastic Clp protease core complex.

The protein localises to the plastid. It is found in the chloroplast stroma. The enzyme catalyses Hydrolysis of proteins to small peptides in the presence of ATP and magnesium. alpha-casein is the usual test substrate. In the absence of ATP, only oligopeptides shorter than five residues are hydrolyzed (such as succinyl-Leu-Tyr-|-NHMec, and Leu-Tyr-Leu-|-Tyr-Trp, in which cleavage of the -Tyr-|-Leu- and -Tyr-|-Trp bonds also occurs).. Cleaves peptides in various proteins in a process that requires ATP hydrolysis. Has a chymotrypsin-like activity. Plays a major role in the degradation of misfolded proteins. The sequence is that of ATP-dependent Clp protease proteolytic subunit from Chaetosphaeridium globosum (Charophycean green alga).